Here is a 501-residue protein sequence, read N- to C-terminus: DDB1- and CUL4-associated factor 12-like protein 1 (501 aa).

Residues 1 to 37 (MRQADSQTQPSPAEQETPQPAGPSNRSPPTMGPQQTG) are compositionally biased toward polar residues. The segment at 1–67 (MRQADSQTQP…PAAPMATAGE (67 aa)) is disordered. WD repeat units lie at residues 185 to 225 (PPSC…PVCL), 230 to 268 (GHRDWIFAIAWMSDTVAVSGSRDGTVALWKVDPDMFNGS), 298 to 337 (PGNRKVRALAFSNKNQELGAVSLDGYFHLWKARSSLSRLL), and 384 to 423 (SREGGTGVRSLSVHQHIVTVGTGHGSLLFYDIRAQKFLEE).

The protein belongs to the WD repeat DCAF12 family.

The sequence is that of DDB1- and CUL4-associated factor 12-like protein 1 (Dcaf12l1) from Mus musculus (Mouse).